Consider the following 523-residue polypeptide: Sugar carrier protein C (523 aa).

The Cytoplasmic segment spans residues 1–25 (MPAVGGIPPSGGNRKVYPGNLTLYV). Transmembrane regions (helical) follow at residues 26–46 (TVTCVVAAMGGLIFGYDIGIS), 86–106 (MFTSSLYLAALIASLVASTIT), 120–140 (VLFCAGAIINGAAKAVWMLIL), 143–163 (ILLGFGIGFANQSVPLYLSEM), 172–192 (LNIGFQLSITIGILVANVLNY), 205–225 (LSLGGAMVPALIITVGSLVLP), 298–320 (LTGINVIMFYAPVLFDTIGFGSD), 327–347 (VITGLVNVFATMVSIYGVDKW), 351–371 (FLFLEGGVQMLICQAIVAACI), 387–407 (WYAVVVVLFICIYVSGFAWSW), 433–453 (SVNMFFTFVVAQVFLIMLCHL), and 456–476 (GLFIFFSFFVLIMSIFVYYFL). Residues 477–523 (PETKGIPIEEMGQVWKQHWYWSRYVVDEDYPNGGLEMGKEGRIPKNV) are Cytoplasmic-facing.

It belongs to the major facilitator superfamily. Sugar transporter (TC 2.A.1.1) family.

The protein resides in the membrane. This chain is Sugar carrier protein C (STC), found in Ricinus communis (Castor bean).